A 154-amino-acid polypeptide reads, in one-letter code: MATFSQKPAEVEKKWVIIDAEGLVVGRLASIIAMRLRGKHKATFTPHVDDGDNVIVINADKVVFTGKKYSDKVYYWHTGYAGGIKERTARQIIEGRFPERVLEKAVERMVPRGPLGRRQMKNLRVYAGPNHPHEAQQPVALDVAALNKKNVRSA.

Belongs to the universal ribosomal protein uL13 family. Part of the 50S ribosomal subunit.

This protein is one of the early assembly proteins of the 50S ribosomal subunit, although it is not seen to bind rRNA by itself. It is important during the early stages of 50S assembly. The sequence is that of Large ribosomal subunit protein uL13 from Rhizobium etli (strain ATCC 51251 / DSM 11541 / JCM 21823 / NBRC 15573 / CFN 42).